The primary structure comprises 490 residues: AP-5 complex subunit mu-1 (490 aa).

The 271-residue stretch at 206-476 (KPQVSISITE…LISSDYYIWN (271 aa)) folds into the MHD domain.

The protein belongs to the adaptor complexes medium subunit family. In terms of assembly, probably part of the adaptor protein complex 5 (AP-5) a tetramer composed of AP5B1, AP5M1, AP5S1 and AP5Z1.

The protein resides in the cytoplasm. It is found in the cytosol. Its subcellular location is the late endosome membrane. It localises to the lysosome membrane. Functionally, as part of AP-5, a probable fifth adaptor protein complex it may be involved in endosomal transport. This Bos taurus (Bovine) protein is AP-5 complex subunit mu-1 (AP5M1).